Reading from the N-terminus, the 150-residue chain is UPF0540 protein At1g62080 (150 aa).

The N-terminal stretch at 1-21 (MNATKFLVLLVIGVLCAIVTA) is a signal peptide. A compositionally biased stretch (low complexity) spans 119-135 (AAAARAKGKVASASRVK). Positions 119-150 (AAAARAKGKVASASRVKGSSEKKKKDRKGKKD) are disordered.

The protein belongs to the UPF0540 family.

This Arabidopsis thaliana (Mouse-ear cress) protein is UPF0540 protein At1g62080.